Consider the following 466-residue polypeptide: Peptidoglycan-N-acetylglucosamine deacetylase PgdA (466 aa).

Residues 1–5 (MKIRW) lie on the Cytoplasmic side of the membrane. A helical transmembrane segment spans residues 6 to 26 (IRLSLVAILIIAVVFIGVIGF). Residues 27 to 466 (QKYQFSKSRN…FDKTDSRMVK (440 aa)) lie on the Extracellular side of the membrane. Residues 266-440 (KRIALTFDDG…KLKSQGYEFV (175 aa)) enclose the NodB homology domain. Asp-273 (proton acceptor) is an active-site residue. Zn(2+)-binding residues include Asp-274, His-324, and His-328. Residue Tyr-365 participates in substrate binding. His-415 (proton donor) is an active-site residue.

In terms of assembly, homodimer. Interacts (via transmembrane domain) with PbpA1 (via transmembrane domain); the interaction is important for the peptidoglycan N-deacetylase function of this protein. Requires Zn(2+) as cofactor.

The protein localises to the cell membrane. The protein resides in the secreted. It is found in the cell wall. The catalysed reaction is peptidoglycan-N-acetyl-D-glucosamine + H2O = peptidoglycan-D-glucosamine + acetate.. Its function is as follows. Catalyzes the deacetylation of N-acetylglucosamine (GlcNAc) residues in peptidoglycan (PG). Also deacetylates N-acetylated PG. Does not deacetylate N-acetylmuramic acid. Confers host lysozyme resistance. Critical for virulence and escape from innate immune response of the host. Required for intracellular survival of bacteria in macrophages of the host. Required for successful host colonization. Controls the production of inflammatory mediators in the bone marrow derived macrophages (BMMs) of the infected mouse. Suppresses Toll-like receptor 2 (TLR2)-dependent secretion of interleukin 6 (IL-6) and interferon-beta (IFN-beta) in the macrophages of the infected mouse. May decrease accessibility of pattern recognition receptors (PRRs) such as nucleotide-binding oligomerization domain protein (NOD) 1 of the host to the bacterial cell wall components. Protects cells from autolysis induced by lysozyme or by other autolysis-inducing agents. The polypeptide is Peptidoglycan-N-acetylglucosamine deacetylase PgdA (Listeria monocytogenes serotype 1/2a (strain 10403S)).